A 109-amino-acid chain; its full sequence is U26-theraphotoxin-Cg1b (109 aa).

The first 18 residues, 1-18 (MNTIIPLLLLSLLITVYA), serve as a signal peptide directing secretion. Residues 19-67 (YALEDGNKEEMQDIAESEFEASNEMLQLAHLLEADRAETEEDRNSRQKR) constitute a propeptide that is removed on maturation. Disulfide bonds link C68–C83, C75–C88, and C82–C103.

Belongs to the neurotoxin 14 (magi-1) family. 07 (Jztx-56) subfamily. In terms of tissue distribution, expressed by the venom gland.

The protein resides in the secreted. Probable ion channel inhibitor. The chain is U26-theraphotoxin-Cg1b from Chilobrachys guangxiensis (Chinese earth tiger tarantula).